Here is a 192-residue protein sequence, read N- to C-terminus: Pyridoxal 5'-phosphate synthase subunit PdxT (192 aa).

53 to 55 (GES) is an L-glutamine binding site. The Nucleophile role is filled by Cys85. Residues Arg112 and 140–141 (IR) each bind L-glutamine. Active-site charge relay system residues include His176 and Glu178.

Belongs to the glutaminase PdxT/SNO family. In terms of assembly, in the presence of PdxS, forms a dodecamer of heterodimers. Only shows activity in the heterodimer.

It catalyses the reaction aldehydo-D-ribose 5-phosphate + D-glyceraldehyde 3-phosphate + L-glutamine = pyridoxal 5'-phosphate + L-glutamate + phosphate + 3 H2O + H(+). It carries out the reaction L-glutamine + H2O = L-glutamate + NH4(+). The protein operates within cofactor biosynthesis; pyridoxal 5'-phosphate biosynthesis. Its function is as follows. Catalyzes the hydrolysis of glutamine to glutamate and ammonia as part of the biosynthesis of pyridoxal 5'-phosphate. The resulting ammonia molecule is channeled to the active site of PdxS. This chain is Pyridoxal 5'-phosphate synthase subunit PdxT, found in Natronomonas pharaonis (strain ATCC 35678 / DSM 2160 / CIP 103997 / JCM 8858 / NBRC 14720 / NCIMB 2260 / Gabara) (Halobacterium pharaonis).